Reading from the N-terminus, the 534-residue chain is Cytochrome c oxidase subunit 1 (534 aa).

A helical membrane pass occupies residues 16–36; the sequence is VLYFMLAIFSGMAGTAMSLII. Positions 39, 42, and 44 each coordinate Ca(2+). 6 helical membrane-spanning segments follow: residues 57 to 77, 101 to 121, 147 to 167, 182 to 202, 235 to 255, and 267 to 287; these read VLVVGHAVLMIFFLVMPALIG, IAFWVLPMGLVCLVTSTLVES, AIFALHLTSISSLLGAINFIV, LPLFVWSIFITAFLLLLSLPV, LFYFFGHPEVYILIIPGFGII, and VFGEISMVYAMASIGLLGFLV. His62 provides a ligand contact to Fe(II)-heme a. His241 provides a ligand contact to Cu cation. A cross-link (1'-histidyl-3'-tyrosine (His-Tyr)) is located at residues 241–245; the sequence is HPEVY. Tyr245 contributes to the O2 binding site. Positions 290 and 291 each coordinate Cu cation. Transmembrane regions (helical) follow at residues 310–330 and 338–358; these read MIIAIPTGIKIFSWLATIYGG and MLYAIAFLFLFTMGGLTGVAL. His368 and Asp369 together coordinate Mg(2+). 2 helical membrane passes run 372–392 and 414–434; these read YVVGHFHYVLSMGAIFSLFAG and FWLIFIGANVIFFPMHFLGIN. His376 is a binding site for heme a3. His378 serves as a coordination point for Fe(II)-heme a. Pro441 is a binding site for Ca(2+). A helical transmembrane segment spans residues 452 to 472; that stretch reads YVASIGSFIATLSLFLFIYIL.

The protein belongs to the heme-copper respiratory oxidase family. Component of the cytochrome c oxidase (complex IV, CIV), a multisubunit enzyme composed of a catalytic core of 3 subunits and several supernumerary subunits. The complex exists as a monomer or a dimer and forms supercomplexes (SCs) in the inner mitochondrial membrane with ubiquinol-cytochrome c oxidoreductase (cytochrome b-c1 complex, complex III, CIII). Heme serves as cofactor. Requires Cu cation as cofactor.

The protein resides in the mitochondrion inner membrane. The catalysed reaction is 4 Fe(II)-[cytochrome c] + O2 + 8 H(+)(in) = 4 Fe(III)-[cytochrome c] + 2 H2O + 4 H(+)(out). It functions in the pathway energy metabolism; oxidative phosphorylation. Its function is as follows. Component of the cytochrome c oxidase, the last enzyme in the mitochondrial electron transport chain which drives oxidative phosphorylation. The respiratory chain contains 3 multisubunit complexes succinate dehydrogenase (complex II, CII), ubiquinol-cytochrome c oxidoreductase (cytochrome b-c1 complex, complex III, CIII) and cytochrome c oxidase (complex IV, CIV), that cooperate to transfer electrons derived from NADH and succinate to molecular oxygen, creating an electrochemical gradient over the inner membrane that drives transmembrane transport and the ATP synthase. Cytochrome c oxidase is the component of the respiratory chain that catalyzes the reduction of oxygen to water. Electrons originating from reduced cytochrome c in the intermembrane space (IMS) are transferred via the dinuclear copper A center (CU(A)) of subunit 2 and heme A of subunit 1 to the active site in subunit 1, a binuclear center (BNC) formed by heme A3 and copper B (CU(B)). The BNC reduces molecular oxygen to 2 water molecules using 4 electrons from cytochrome c in the IMS and 4 protons from the mitochondrial matrix. The sequence is that of Cytochrome c oxidase subunit 1 (COXI) from Saccharomyces paradoxus (Yeast).